The following is a 108-amino-acid chain: Large ribosomal subunit protein uL24 (108 aa).

It belongs to the universal ribosomal protein uL24 family. In terms of assembly, part of the 50S ribosomal subunit.

In terms of biological role, one of two assembly initiator proteins, it binds directly to the 5'-end of the 23S rRNA, where it nucleates assembly of the 50S subunit. One of the proteins that surrounds the polypeptide exit tunnel on the outside of the subunit. This Mycoplasmopsis synoviae (strain 53) (Mycoplasma synoviae) protein is Large ribosomal subunit protein uL24.